The primary structure comprises 99 residues: UPF0213 protein YazA (99 aa).

A GIY-YIG domain is found at 4-79 (NNHFFYVVKC…KKLTRKKKEL (76 aa)).

Belongs to the UPF0213 family.

This is UPF0213 protein YazA (yazA) from Bacillus subtilis (strain 168).